The chain runs to 344 residues: tRNA(Ile)-lysidine synthase (344 aa).

43 to 48 contacts ATP; that stretch reads SGGADS.

This sequence belongs to the tRNA(Ile)-lysidine synthase family.

The protein resides in the cytoplasm. It catalyses the reaction cytidine(34) in tRNA(Ile2) + L-lysine + ATP = lysidine(34) in tRNA(Ile2) + AMP + diphosphate + H(+). Functionally, ligates lysine onto the cytidine present at position 34 of the AUA codon-specific tRNA(Ile) that contains the anticodon CAU, in an ATP-dependent manner. Cytidine is converted to lysidine, thus changing the amino acid specificity of the tRNA from methionine to isoleucine. This is tRNA(Ile)-lysidine synthase from Bordetella bronchiseptica (strain ATCC BAA-588 / NCTC 13252 / RB50) (Alcaligenes bronchisepticus).